The sequence spans 456 residues: MKISVRNLEPTKVKLTVTVDPEEFNPYLDEARKEIAKQVNVPGFRKGHVPGKIIDQRIGFGAVAGEAVNNGVPELYSKALETKKIHPMAQPEIDVQDVPESAKDETKLKFVATVERRPDIELPALDGMEIEVAKAEVTDEDINNRLEALRQRFGTLVSVDRPAAKGDYANIDLNAEINGETVDSQEGVSYELGSATMLDGLDEALEGLSAGEETSFEGTLEAGKHEGEKALIKVKVNSVKAEELPELDDDFASEASEFDTLDELKEDLKKVAAQDAESRQATAARDAFIAKLEDGLEIPVPKGVKAEMVEQQLKNVTADPSKATKEQKAEAEETVEKELRDQMVLDVLAETMDVKVSQGEVFNFLASIAQQYGMDPNAFIQAIIRNGQIGSAVQEVGRSKGLLSGMRAVTFKSEGETLDLSAFLGEAAEDEESESVEAASAAAAVADSLAADKDAE.

A PPIase FKBP-type domain is found at 166-245 (GDYANIDLNA…VNSVKAEELP (80 aa)).

It belongs to the FKBP-type PPIase family. Tig subfamily.

The protein localises to the cytoplasm. The enzyme catalyses [protein]-peptidylproline (omega=180) = [protein]-peptidylproline (omega=0). Involved in protein export. Acts as a chaperone by maintaining the newly synthesized protein in an open conformation. Functions as a peptidyl-prolyl cis-trans isomerase. The polypeptide is Trigger factor (Bifidobacterium adolescentis (strain ATCC 15703 / DSM 20083 / NCTC 11814 / E194a)).